Reading from the N-terminus, the 101-residue chain is Small ribosomal subunit protein uS14 (101 aa).

The protein belongs to the universal ribosomal protein uS14 family. In terms of assembly, part of the 30S ribosomal subunit. Contacts proteins S3 and S10.

In terms of biological role, binds 16S rRNA, required for the assembly of 30S particles and may also be responsible for determining the conformation of the 16S rRNA at the A site. This Nitrosomonas europaea (strain ATCC 19718 / CIP 103999 / KCTC 2705 / NBRC 14298) protein is Small ribosomal subunit protein uS14.